A 1031-amino-acid chain; its full sequence is Protein draper (1031 aa).

A signal peptide spans 1 to 16; it reads MLPVILIACLAQLVLA. At 17 to 800 the chain is on the extracellular side; sequence QADLKDLDGP…DQSENSSRAS (784 aa). One can recognise an EMI domain in the interval 25 to 100; it reads GPNICKRREL…YIASAGECVP (76 aa). Intrachain disulfides connect Cys-29/Cys-88, Cys-55/Cys-62, Cys-87/Cys-98, Cys-102/Cys-111, Cys-106/Cys-117, and Cys-119/Cys-128. Residue Asn-73 is glycosylated (N-linked (GlcNAc...) asparagine). EGF-like domains lie at 99–129, 137–172, 180–215, 223–258, 266–301, and 309–344; these read VPHC…PACD, YGRN…ARCA, FGAN…PLCD, HGAQ…DVCA, YGPG…ERCF, and YGFN…AKCA. Residue Asn-140 is glycosylated (N-linked (GlcNAc...) asparagine). Disulfide bonds link Cys-141–Cys-153, Cys-147–Cys-160, and Cys-162–Cys-171. N-linked (GlcNAc...) asparagine glycosylation is present at Asn-183. 9 disulfides stabilise this stretch: Cys-184–Cys-196, Cys-190–Cys-203, Cys-205–Cys-214, Cys-227–Cys-239, Cys-233–Cys-246, Cys-248–Cys-257, Cys-270–Cys-282, Cys-276–Cys-289, and Cys-291–Cys-300. N-linked (GlcNAc...) asparagine glycosylation is present at Asn-312. Cystine bridges form between Cys-313–Cys-325, Cys-319–Cys-332, and Cys-334–Cys-343. Asn-329 carries N-linked (GlcNAc...) asparagine glycosylation. N-linked (GlcNAc...) asparagine glycosylation occurs at Asn-358. 2 EGF-like domains span residues 398–433 and 484–519; these read YGPN…PTCE and FGQD…ERCE. Disulfide bonds link Cys-402/Cys-414, Cys-408/Cys-421, Cys-423/Cys-432, Cys-488/Cys-500, Cys-494/Cys-507, and Cys-509/Cys-518. N-linked (GlcNAc...) asparagine glycosylation occurs at Asn-418. N-linked (GlcNAc...) asparagine glycosylation is present at Asn-504. N-linked (GlcNAc...) asparagine glycans are attached at residues Asn-540, Asn-584, and Asn-585. The EGF-like 9 domain maps to 572 to 607; sequence YGENCDKVCRCLNNSSCDPDSGNCICSAGWTGADCA. 3 cysteine pairs are disulfide-bonded: Cys-576-Cys-588, Cys-582-Cys-595, and Cys-597-Cys-606. N-linked (GlcNAc...) asparagine glycosylation is present at Asn-630. One can recognise an EGF-like 10 domain in the interval 660–695; that stretch reads YGPGCKLKCNCEHGGECNHVTGQCQCLPGWTGSNCN. Cystine bridges form between Cys-664–Cys-676, Cys-670–Cys-683, and Cys-685–Cys-694. N-linked (GlcNAc...) asparagine glycosylation is found at Asn-695 and Asn-795. The helical transmembrane segment at 801–821 threads the bilayer; the sequence is VALTLVLMTLFACIIFAVFIY. The Cytoplasmic portion of the chain corresponds to 822-1031; sequence YRRRVSNLKT…SPSSSPKFLK (210 aa). Residues 940–954 show a composition bias toward basic and acidic residues; that stretch reads KEGYKDPDEYDHLDY. Disordered stretches follow at residues 940 to 964 and 989 to 1031; these read KEGY…QKPH and TVLL…KFLK. The segment covering 1009–1031 has biased composition (polar residues); sequence DNTNTNLDNVSTASPSSSPKFLK.

Belongs to the MEGF family. As to quaternary structure, interacts (via the cytoplasmic domain) with shark; this is required for the recruitment of drpr and glial cells to severed axons and for the phagocytosis of axonal debris by glial cells following axon injury. Interacts with ced-6. Interacts with csw; this results in dephosphorylation of drpr isoform A which is required for the inhibition of glial cell engulfment of axonal debris produced following axonal injury. In terms of processing, phosphorylated on tyrosine residues. Phosphorylation is induced by binding to prtp. It is also induced by binding to the membrane phospholipid phosphatidylserine. Phosphorylation may be mediated directly or indirectly by Src42a and is required for interaction with shark. Dephosphorylated by csw which is required for the inhibition of glial cell engulfment of axonal debris produced following axonal injury. In terms of tissue distribution, expressed in adult head (at protein level). Expressed in glia, macrophages and ectoderm (at protein level). Detected in glia around the mushroom body dorsal lobe and in glial processes infiltrating the medial lobe (at protein level). Expressed in adult brain glia including antennal lobe glia (at protein level). Expressed in the larval fat body (at protein level). Expressed in the ovary (at protein level). Isoform B: Predominant isoform in adult glia.

The protein resides in the cell membrane. The protein localises to the cell projection. It localises to the axon. It is found in the cytoplasm. Its subcellular location is the postsynaptic cell membrane. The protein resides in the cell cortex. The protein localises to the phagocytic cup. It localises to the cytoplasmic vesicle. It is found in the phagosome. Receptor which is involved in the phagocytosis of a variety of cells including apoptotic cells, severed and pruned axons, degenerating dendrites, salivary gland cells, germline cells and bacteria. Binds to the ligand prtp which relocates from the endoplasmic reticulum to the cell surface during apoptosis. Ligand-binding may promote tyrosine phosphorylation mediated by Src42a, interaction with shark and subsequent activation of phagocytosis. Also binds to the membrane phospholipid phosphatidylserine which is exposed on the surface of apoptotic cells. Required for the phagocytosis of apoptotic cells by macrophages. Also required for the phagocytosis of apoptotic neurons by glial cells in the embryonic nervous system. Acts downstream of NimC4/simu in the glial phagocytosis of apoptotic neurons. Plays a role in the glial engulfment of larval axons as part of programmed axon pruning during metamorphosis. Also mediates glial cell clearance of severed axons following axonal injury. Required for the engulfment of degenerating dendrites by epidermal cells. Required in the ovary for the engulfment and subsequent processing of dying germline cells by follicular epithelial cells through activation of the JNK/bsk pathway. Plays a role in neuromuscular junction development by mediating the clearance of presynaptic debris and immature boutons which are shed by growing synapses. Required for larval salivary gland cell death which occurs following a rise in steroid levels after puparium formation. Also involved in bacterial phagocytosis. Required for hemocyte phagocytosis of the Gram-positive bacterium S.aureus. Lipoteichoic acid, synthesized by the S.aureus lipoteichoic acid synthase ltaS, acts as a ligand for drpr in this process. Together with Src42a and shark, promotes the migration of macrophages to sites of wounding as part of a signaling cascade where Scr42a detects production of hydrogen peroxide at wound sites which triggers phosphorylation of drpr and subsequent recruitment and activation of shark. Also required for macrophage priming which occurs following phagocytosis of apoptotic cells and ensures that macrophages develop a form of molecular memory that allows them to later mount an inflammatory response to tissue damage and bacterial infection. Is also an essential factor in the regulation of muscle development and myogenesis, and as a consequence is required for normal locomotion. Likely to control the balance between skeletal muscle satellite cells proliferation and differentiation through regulation of the notch signaling pathway. In terms of biological role, promotes engulfment of axonal debris by glial cells following axonal injury. Its function is as follows. Potently inhibits glial cell engulfment of axonal debris produced following axonal injury. In Drosophila melanogaster (Fruit fly), this protein is Protein draper.